The sequence spans 385 residues: MLWPASEEFAALCRTQLELVVNSLGASSLAVYLSETLNDSPSWSPVAVYPEAASLLSLAIPPTLPPPTQVPETSLSHYPQQVVSSLANQLILPLMYQNWVLGVLVAQRQHRPWLAAEQAQLQQVAQTLAIACVLDQRQQWLSHSPAQPLDQRQQRFDDLLHQLRNPVAAIRTFVKLLLKRLEPDHKGRPLAEGIAKETERLMALLEDYRQQRNDIPALTGSQPLPLAGKPLDLAETLLPLISAAQARAEMEGKTFVVEIPPQLPPIWLEERVLQEVVGNLLDNAFKYTPKGGTIGLRLMLSSPALELTVWDTGCGIPKEAQPRLFERGYRGVQADSGIEGSGLGLAIAQDLLRPYGLSLRVTSPYAGDRGTAFTLAIPWQMKVEP.

The GAF domain maps to 11–131 (ALCRTQLELV…QQVAQTLAIA (121 aa)). Cysteine 13 is a [3Fe-4S] cluster binding site. Residues 142 to 270 (SHSPAQPLDQ…PQLPPIWLEE (129 aa)) are DHp domain, may sense NaCl. The Histidine kinase domain occupies 158 to 381 (DLLHQLRNPV…AFTLAIPWQM (224 aa)). A Phosphohistidine; by autocatalysis modification is found at histidine 161.

It belongs to the chloroplast sensor kinase protein family. As to quaternary structure, hexamers; upon treatment with 0.5 M NaCl only tetramers are seen. The tetramers are probably inactive. It depends on [3Fe-4S] cluster as a cofactor. Post-translationally, autophosphorylates, possibly on His-161.

The enzyme catalyses ATP + protein L-histidine = ADP + protein N-phospho-L-histidine.. Functionally, member of 2 two-component regulatory system(s) Hik2/Rre1 and Hik2/RppA. Transduces PQ (plastoquinone) redox signals to photosystem gene expression machinery during the adjustment of photosystem stoichiometry. Reduced PQ suppresses its autophosphorylation activity (i.e. kinase activity is higher under oxidizing conditions). As part of a two-component regulatory system with Rre1, controls expression of sigB and several other genes in response to hyperosmotic stress. May transfer phosphate to RppA in a possible Hik2/RppA two-component system. In Thermosynechococcus vestitus (strain NIES-2133 / IAM M-273 / BP-1), this protein is Sensor histidine kinase Hik2.